The primary structure comprises 182 residues: Putative colanic acid biosynthesis acetyltransferase WcaF (182 aa).

This sequence belongs to the transferase hexapeptide repeat family.

It participates in slime biogenesis; slime polysaccharide biosynthesis. The chain is Putative colanic acid biosynthesis acetyltransferase WcaF (wcaF) from Shigella flexneri.